Here is a 201-residue protein sequence, read N- to C-terminus: 3-isopropylmalate dehydratase small subunit (201 aa).

It belongs to the LeuD family. LeuD type 1 subfamily. In terms of assembly, heterodimer of LeuC and LeuD.

It carries out the reaction (2R,3S)-3-isopropylmalate = (2S)-2-isopropylmalate. The protein operates within amino-acid biosynthesis; L-leucine biosynthesis; L-leucine from 3-methyl-2-oxobutanoate: step 2/4. Catalyzes the isomerization between 2-isopropylmalate and 3-isopropylmalate, via the formation of 2-isopropylmaleate. In Enterobacter sp. (strain 638), this protein is 3-isopropylmalate dehydratase small subunit.